A 227-amino-acid polypeptide reads, in one-letter code: uncharacterized protein (227 aa).

Residues 5 to 220 enclose the AMMECR1 domain; it reads TSSPYAFYAF…IAWDEFETGL (216 aa).

This is an uncharacterized protein from Kluyveromyces lactis (strain ATCC 8585 / CBS 2359 / DSM 70799 / NBRC 1267 / NRRL Y-1140 / WM37) (Yeast).